The sequence spans 320 residues: Malate dehydrogenase (320 aa).

NAD(+) contacts are provided by residues 10–15 (GAGQIG) and Asp34. Arg83 and Arg89 together coordinate substrate. NAD(+) is bound by residues Asn96 and 119 to 121 (ITN). Substrate is bound by residues Asn121 and Arg152. His176 acts as the Proton acceptor in catalysis.

The protein belongs to the LDH/MDH superfamily. MDH type 3 family.

It carries out the reaction (S)-malate + NAD(+) = oxaloacetate + NADH + H(+). In terms of biological role, catalyzes the reversible oxidation of malate to oxaloacetate. In Dinoroseobacter shibae (strain DSM 16493 / NCIMB 14021 / DFL 12), this protein is Malate dehydrogenase.